Consider the following 435-residue polypeptide: ATP-dependent protease ATPase subunit HslU (435 aa).

Residues V18, 60–65 (GCGKTE), D248, E313, and R385 each bind ATP.

The protein belongs to the ClpX chaperone family. HslU subfamily. In terms of assembly, a double ring-shaped homohexamer of HslV is capped on each side by a ring-shaped HslU homohexamer. The assembly of the HslU/HslV complex is dependent on binding of ATP.

It is found in the cytoplasm. ATPase subunit of a proteasome-like degradation complex; this subunit has chaperone activity. The binding of ATP and its subsequent hydrolysis by HslU are essential for unfolding of protein substrates subsequently hydrolyzed by HslV. HslU recognizes the N-terminal part of its protein substrates and unfolds these before they are guided to HslV for hydrolysis. This is ATP-dependent protease ATPase subunit HslU from Beijerinckia indica subsp. indica (strain ATCC 9039 / DSM 1715 / NCIMB 8712).